Here is a 290-residue protein sequence, read N- to C-terminus: Pyridoxal kinase PdxY (290 aa).

Substrate-binding positions include Ser-12 and 47 to 48 (TQ). Residues Asp-114, Glu-151, Lys-184, and 211 to 214 (RPLL) contribute to the ATP site. Position 225 (Asp-225) interacts with substrate.

It belongs to the pyridoxine kinase family. PdxY subfamily. As to quaternary structure, homodimer. Mg(2+) is required as a cofactor.

The catalysed reaction is pyridoxal + ATP = pyridoxal 5'-phosphate + ADP + H(+). Its pathway is cofactor metabolism; pyridoxal 5'-phosphate salvage; pyridoxal 5'-phosphate from pyridoxal: step 1/1. Pyridoxal kinase involved in the salvage pathway of pyridoxal 5'-phosphate (PLP). Catalyzes the phosphorylation of pyridoxal to PLP. This chain is Pyridoxal kinase PdxY, found in Pseudomonas putida (strain ATCC 47054 / DSM 6125 / CFBP 8728 / NCIMB 11950 / KT2440).